The sequence spans 369 residues: Anhydro-N-acetylmuramic acid kinase (369 aa).

Residue 12–19 (GTSLDGVD) participates in ATP binding.

The protein belongs to the anhydro-N-acetylmuramic acid kinase family.

The enzyme catalyses 1,6-anhydro-N-acetyl-beta-muramate + ATP + H2O = N-acetyl-D-muramate 6-phosphate + ADP + H(+). Its pathway is amino-sugar metabolism; 1,6-anhydro-N-acetylmuramate degradation. It functions in the pathway cell wall biogenesis; peptidoglycan recycling. In terms of biological role, catalyzes the specific phosphorylation of 1,6-anhydro-N-acetylmuramic acid (anhMurNAc) with the simultaneous cleavage of the 1,6-anhydro ring, generating MurNAc-6-P. Is required for the utilization of anhMurNAc either imported from the medium or derived from its own cell wall murein, and thus plays a role in cell wall recycling. This Escherichia coli O1:K1 / APEC protein is Anhydro-N-acetylmuramic acid kinase.